Reading from the N-terminus, the 146-residue chain is VPIQKVQDDTKTLIKTIVTRINDISHTQSVSSKQKVTGLDFIPGLHPILTLSKMDQTLAVYQQILTSMPSRNMIQISNDLENLRDLLHVLAFSKSCHLPWASGLETLDSLGGVLEASGYSTEVVALSRLQGSLQDMLWQLDLSPGC.

A disulfide bridge links Cys-96 with Cys-146.

The protein belongs to the leptin family.

It is found in the secreted. In terms of biological role, key player in the regulation of energy balance and body weight control. Once released into the circulation, has central and peripheral effects by binding LEPR, found in many tissues, which results in the activation of several major signaling pathways. In the hypothalamus, acts as an appetite-regulating factor that induces a decrease in food intake and an increase in energy consumption by inducing anorexinogenic factors and suppressing orexigenic neuropeptides, also regulates bone mass and secretion of hypothalamo-pituitary-adrenal hormones. In the periphery, increases basal metabolism, influences reproductive function, regulates pancreatic beta-cell function and insulin secretion, is pro-angiogenic for endothelial cell and affects innate and adaptive immunity. In the arcuate nucleus of the hypothalamus, activates by depolarization POMC neurons inducing FOS and SOCS3 expression to release anorexigenic peptides and inhibits by hyperpolarization NPY neurons inducing SOCS3 with a consequent reduction on release of orexigenic peptides. In addition to its known satiety inducing effect, has a modulatory role in nutrient absorption. In the intestine, reduces glucose absorption by enterocytes by activating PKC and leading to a sequential activation of p38, PI3K and ERK signaling pathways which exerts an inhibitory effect on glucose absorption. Acts as a growth factor on certain tissues, through the activation of different signaling pathways increases expression of genes involved in cell cycle regulation such as CCND1, via JAK2-STAT3 pathway, or VEGFA, via MAPK1/3 and PI3K-AKT1 pathways. May also play an apoptotic role via JAK2-STAT3 pathway and up-regulation of BIRC5 expression. Pro-angiogenic, has mitogenic activity on vascular endothelial cells and plays a role in matrix remodeling by regulating the expression of matrix metalloproteinases (MMPs) and tissue inhibitors of metalloproteinases (TIMPs). In innate immunity, modulates the activity and function of neutrophils by increasing chemotaxis and the secretion of oxygen radicals. Increases phagocytosis by macrophages and enhances secretion of pro-inflammatory mediators. Increases cytotoxic ability of NK cells. Plays a pro-inflammatory role, in synergy with IL1B, by inducing NOS2 which promotes the production of IL6, IL8 and Prostaglandin E2, through a signaling pathway that involves JAK2, PI3K, MAP2K1/MEK1 and MAPK14/p38. In adaptive immunity, promotes the switch of memory T-cells towards T helper-1 cell immune responses. Increases CD4(+)CD25(-) T-cell proliferation and reduces autophagy during TCR (T-cell receptor) stimulation, through MTOR signaling pathway activation and BCL2 up-regulation. In Pan troglodytes (Chimpanzee), this protein is Leptin (LEP).